Here is a 345-residue protein sequence, read N- to C-terminus: Biotin synthase (345 aa).

Residues 49–276 form the Radical SAM core domain; the sequence is NQVQMSTLLS…ASFVRLSAGR (228 aa). The [4Fe-4S] cluster site is built by C64, C68, and C71. Residues C108, C139, C199, and R271 each contribute to the [2Fe-2S] cluster site.

The protein belongs to the radical SAM superfamily. Biotin synthase family. Homodimer. [4Fe-4S] cluster serves as cofactor. The cofactor is [2Fe-2S] cluster.

The catalysed reaction is (4R,5S)-dethiobiotin + (sulfur carrier)-SH + 2 reduced [2Fe-2S]-[ferredoxin] + 2 S-adenosyl-L-methionine = (sulfur carrier)-H + biotin + 2 5'-deoxyadenosine + 2 L-methionine + 2 oxidized [2Fe-2S]-[ferredoxin]. Its pathway is cofactor biosynthesis; biotin biosynthesis; biotin from 7,8-diaminononanoate: step 2/2. Catalyzes the conversion of dethiobiotin (DTB) to biotin by the insertion of a sulfur atom into dethiobiotin via a radical-based mechanism. The chain is Biotin synthase from Nitrosococcus oceani (strain ATCC 19707 / BCRC 17464 / JCM 30415 / NCIMB 11848 / C-107).